The primary structure comprises 889 residues: DNA-directed RNA polymerase subunit Rpo1N (889 aa).

Cys-62, Cys-65, Cys-72, His-75, Cys-102, Cys-105, Cys-149, and Cys-152 together coordinate Zn(2+). Mg(2+) contacts are provided by Asp-466, Asp-468, and Asp-470.

This sequence belongs to the RNA polymerase beta' chain family. Part of the RNA polymerase complex. It depends on Mg(2+) as a cofactor. Requires Zn(2+) as cofactor.

The protein resides in the cytoplasm. The catalysed reaction is RNA(n) + a ribonucleoside 5'-triphosphate = RNA(n+1) + diphosphate. DNA-dependent RNA polymerase (RNAP) catalyzes the transcription of DNA into RNA using the four ribonucleoside triphosphates as substrates. Forms the clamp head domain. This chain is DNA-directed RNA polymerase subunit Rpo1N, found in Methanococcus vannielii (strain ATCC 35089 / DSM 1224 / JCM 13029 / OCM 148 / SB).